The following is a 491-amino-acid chain: MYRKSALELRDAVVNRELSVTAITEYFYHRIESHDEQIGAFLSLCKERALLRASRIDDKLAKGDPIGLLAGIPIGVKDNIHITGVKTTCASKMLENFVAPFDSTVVRRIEMEDGILLGKLNMDEFAMGSTTRYSAFHPTNNPWDLERVPGGSSGGSAAAVSARFCPIALGSDTGGSIRQPAAFCGVVGFKPSYGAVSRYGLVAFGSSLDQIGPLTTVVEDVALAMDAFAGRDPKDSTTRDFFKGTFSQALSLEVPKLIGVPRGFLDGLQEDCKENFFEALAVMEREGSRIIDVDLSVLKHAVPVYYIVASAEAATNLARFDGVRYGHRCAQADNMHEMYARSRKEGFGKEVTRRILLGNYVLSAERQNIFYKKGMAVRARLIDAFQAAFERCDVIAMPVCATPAIRDQDVLDPVSLYLQDVYTVAVNLAYLPAISVPSGLSKEGLPLGVQFIGERGSDQQICQVGYSFQEHSQIKQLYPKAVNGLFDGGIE.

Active-site charge relay system residues include Lys-77 and Ser-152. The active-site Acyl-ester intermediate is the Ser-176.

It belongs to the amidase family. GatA subfamily. In terms of assembly, heterotrimer of A, B and C subunits.

The enzyme catalyses L-glutamyl-tRNA(Gln) + L-glutamine + ATP + H2O = L-glutaminyl-tRNA(Gln) + L-glutamate + ADP + phosphate + H(+). Its function is as follows. Allows the formation of correctly charged Gln-tRNA(Gln) through the transamidation of misacylated Glu-tRNA(Gln) in organisms which lack glutaminyl-tRNA synthetase. The reaction takes place in the presence of glutamine and ATP through an activated gamma-phospho-Glu-tRNA(Gln). The sequence is that of Glutamyl-tRNA(Gln) amidotransferase subunit A from Chlamydia trachomatis serovar A (strain ATCC VR-571B / DSM 19440 / HAR-13).